A 182-amino-acid chain; its full sequence is Large ribosomal subunit protein uL5 (182 aa).

As to quaternary structure, part of the 50S ribosomal subunit; part of the 5S rRNA/uL5/uL18/bL25 (TL7) subcomplex; has also been isolated as a complex with 5S rRNA, bL25 (TL7) and DNA binding protein II. Forms a bridge to the 30S subunit in the 70S ribosome, contacting protein uS13; this bridge is straddled by the 5S rRNA. Contacts the P site tRNA.

Its function is as follows. This is one of the proteins that bind and probably mediate the attachment of the 5S RNA into the large ribosomal subunit, where it forms part of the central protuberance. In the 70S ribosome it contacts protein S13 of the 30S subunit (forming bridge B1b) connecting the head of the 30S subunit to the top of the 50S subunit. The bridge itself contacts the P site tRNA and is implicated in movement during ribosome translocation. Also contacts the P site tRNA independently of the intersubunit bridge; the 5S rRNA and some of its associated proteins might help stabilize positioning of ribosome-bound tRNAs. The polypeptide is Large ribosomal subunit protein uL5 (rplE) (Thermus thermophilus (strain ATCC 27634 / DSM 579 / HB8)).